A 218-amino-acid polypeptide reads, in one-letter code: MNKFWETGRKIVAVGRNYAQHAKELGNEIPSEPFFFLKPTSSYLLQGTGPIEIPLESSDIHHEVELGIVIGKKGRDIDLKSAMDYVSGYTLALDMTSRDQQSIAKAKSLPWTVSKGYDTFCPISGFIPKDKIKDLNNVELWCSVDGQIKQKGNTNQMIFDVPHLIQYISSIMTLESGDLILTGTPSGVGPVKPGQVIKCGITGLDTDMQFDIILRKRN.

The transit peptide at M1–Y18 directs the protein to the mitochondrion. Residues E63, E65, and D94 each contribute to the Mg(2+) site.

Belongs to the FAH family. In terms of assembly, homodimer. It depends on Mg(2+) as a cofactor. Requires Mn(2+) as cofactor.

The protein resides in the mitochondrion. Its subcellular location is the cytoplasm. The protein localises to the cytosol. It carries out the reaction a 3-acylpyruvate + H2O = a carboxylate + pyruvate + H(+). It catalyses the reaction acetylpyruvate + H2O = acetate + pyruvate + H(+). The enzyme catalyses 3-fumarylpyruvate + H2O = fumarate + pyruvate + H(+). The catalysed reaction is oxaloacetate + H(+) = pyruvate + CO2. Functionally, mitochondrial protein that acts as an oxaloacetate decarboxylase (ODx), catalyzing the decarboxylation of oxaloacetate (OAA) to pyruvate and CO(2), and as such is likely a regulatory enzyme in the TCA cycle. Also displays acylpyruvase activity, being able to hydrolyze acetylpyruvate and fumarylpyruvate in vitro. This Dictyostelium discoideum (Social amoeba) protein is Oxaloacetate decarboxylase, mitochondrial (fahd1).